The chain runs to 230 residues: Large ribosomal subunit protein uL1 (230 aa).

Belongs to the universal ribosomal protein uL1 family. As to quaternary structure, part of the 50S ribosomal subunit.

Its function is as follows. Binds directly to 23S rRNA. The L1 stalk is quite mobile in the ribosome, and is involved in E site tRNA release. In terms of biological role, protein L1 is also a translational repressor protein, it controls the translation of the L11 operon by binding to its mRNA. The sequence is that of Large ribosomal subunit protein uL1 from Paramagnetospirillum magneticum (strain ATCC 700264 / AMB-1) (Magnetospirillum magneticum).